A 478-amino-acid polypeptide reads, in one-letter code: Transcript termination protein A18 (478 aa).

The Helicase ATP-binding domain maps to lysine 98–serine 254. Leucine 111–threonine 118 is an ATP binding site. Positions aspartate 204–histidine 207 match the DESH box motif. One can recognise a Helicase C-terminal domain in the interval isoleucine 307 to glycine 454.

The protein belongs to the helicase family. Poxviruses subfamily. In terms of assembly, interacts with G2. Might be part of a transcription complex composed at least of G2, A18, and H5.

It localises to the virion. Functionally, DNA helicase which seems to act as a postreplicative transcription termination factor. Involved in ATP-dependent release of nascent RNA. Forms a stable complex with single-stranded DNA, and to a lesser extent RNA. The sequence is that of Transcript termination protein A18 from Erythrocebus patas (Red guenon).